A 173-amino-acid chain; its full sequence is Protein tyrosine phosphatase type IVA 3 (173 aa).

Residues 8–161 (APVEVSYRHM…YRPKQRLRFK (154 aa)) form the Tyrosine-protein phosphatase domain. Cysteines 49 and 104 form a disulfide. The active-site Proton donor is the Asp-72. The active-site Phosphocysteine intermediate is the Cys-104. Position 110 (Arg-110) interacts with substrate. Residue Cys-170 is modified to Cysteine methyl ester. Cys-170 is lipidated: S-farnesyl cysteine. Residues 171-173 (CVM) constitute a propeptide, removed in mature form.

This sequence belongs to the protein-tyrosine phosphatase family. In terms of assembly, interacts with tubulin. Farnesylated. Farnesylation is required for membrane targeting. Unfarnesylated forms are shifted into the nucleus. In terms of tissue distribution, present in the small intestine, where it is located in the differentiated epithelial cells of the villus but not in the proliferating crypt cells (at protein level). Expressed in heart and skeletal muscle, and at lower levels in lung, spleen and testis.

Its subcellular location is the cell membrane. The protein resides in the early endosome. It carries out the reaction O-phospho-L-tyrosyl-[protein] + H2O = L-tyrosyl-[protein] + phosphate. Inhibited by sodium orthovanadate and peroxovanadium compounds, and by pentamidine. Protein tyrosine phosphatase which stimulates progression from G1 into S phase during mitosis. Enhances cell proliferation, cell motility and invasive activity, and promotes cancer metastasis. May be involved in the progression of cardiac hypertrophy by inhibiting intracellular calcium mobilization in response to angiotensin II. The polypeptide is Protein tyrosine phosphatase type IVA 3 (Ptp4a3) (Mus musculus (Mouse)).